The chain runs to 262 residues: MISTLLIIDAMNLVRRIYAVQQKQHGDTPTALIATQSTTTNALKKLLRIHQPTHAICVFDSHAPSWRHQIYPEYKQGRKPIPELLKQGLPAIQEQFFDLGIDSLVTEEDEADDLIACLADKIAKQQQKCIIVSTDKGFYQLLNESIQLYDYFQNSFVIRQQVHQKMGISIQQLNDYWAITGISSSAIKGVEGIGSKGALSLLQQYGSLNNIFQQAEDSNNKLLTKIKSQQSNAILAKQLVTLKTDIKLGFNLKDLRYTDSTD.

Mg(2+) is bound at residue Asp-112. One can recognise a 5'-3' exonuclease domain in the interval 171 to 258 (QQLNDYWAIT…GFNLKDLRYT (88 aa)). K(+) is bound by residues Ile-179, Val-190, and Ile-193. Residues 192–197 (GIGSKG) are interaction with DNA.

This sequence belongs to the Xni family. The cofactor is Mg(2+). It depends on K(+) as a cofactor.

Functionally, has flap endonuclease activity. During DNA replication, flap endonucleases cleave the 5'-overhanging flap structure that is generated by displacement synthesis when DNA polymerase encounters the 5'-end of a downstream Okazaki fragment. The sequence is that of Flap endonuclease Xni from Psychromonas ingrahamii (strain DSM 17664 / CCUG 51855 / 37).